The following is a 407-amino-acid chain: Phosphopentomutase (407 aa).

Positions 10, 306, 311, 347, 348, and 359 each coordinate Mn(2+).

The protein belongs to the phosphopentomutase family. It depends on Mn(2+) as a cofactor.

The protein localises to the cytoplasm. The enzyme catalyses 2-deoxy-alpha-D-ribose 1-phosphate = 2-deoxy-D-ribose 5-phosphate. It carries out the reaction alpha-D-ribose 1-phosphate = D-ribose 5-phosphate. Its pathway is carbohydrate degradation; 2-deoxy-D-ribose 1-phosphate degradation; D-glyceraldehyde 3-phosphate and acetaldehyde from 2-deoxy-alpha-D-ribose 1-phosphate: step 1/2. In terms of biological role, isomerase that catalyzes the conversion of deoxy-ribose 1-phosphate (dRib-1-P) and ribose 1-phosphate (Rib-1-P) to deoxy-ribose 5-phosphate (dRib-5-P) and ribose 5-phosphate (Rib-5-P), respectively. The polypeptide is Phosphopentomutase (Salmonella paratyphi A (strain AKU_12601)).